The sequence spans 175 residues: Large ribosomal subunit protein uL6 (175 aa).

Belongs to the universal ribosomal protein uL6 family. Part of the 50S ribosomal subunit.

This protein binds to the 23S rRNA, and is important in its secondary structure. It is located near the subunit interface in the base of the L7/L12 stalk, and near the tRNA binding site of the peptidyltransferase center. The protein is Large ribosomal subunit protein uL6 of Xanthomonas oryzae pv. oryzae (strain MAFF 311018).